The primary structure comprises 82 residues: Large ribosomal subunit protein uL23 (82 aa).

It belongs to the universal ribosomal protein uL23 family. As to quaternary structure, part of the 50S ribosomal subunit. Contacts protein L29.

Binds to 23S rRNA. One of the proteins that surrounds the polypeptide exit tunnel on the outside of the ribosome. The chain is Large ribosomal subunit protein uL23 from Methanosarcina barkeri (strain Fusaro / DSM 804).